The chain runs to 244 residues: Carboxy-S-adenosyl-L-methionine synthase (244 aa).

Residues tyrosine 41, 66-68, 91-92, 119-120, asparagine 134, and arginine 201 contribute to the S-adenosyl-L-methionine site; these read GCS, DN, and DI.

It belongs to the class I-like SAM-binding methyltransferase superfamily. Cx-SAM synthase family. Homodimer.

It catalyses the reaction prephenate + S-adenosyl-L-methionine = carboxy-S-adenosyl-L-methionine + 3-phenylpyruvate + H2O. Its function is as follows. Catalyzes the conversion of S-adenosyl-L-methionine (SAM) to carboxy-S-adenosyl-L-methionine (Cx-SAM). The polypeptide is Carboxy-S-adenosyl-L-methionine synthase (Photobacterium profundum (strain SS9)).